We begin with the raw amino-acid sequence, 313 residues long: Phenylalanine-4-hydroxylase (313 aa).

His-154, His-159, and Glu-200 together coordinate Fe cation.

Belongs to the biopterin-dependent aromatic amino acid hydroxylase family. Requires Fe(2+) as cofactor.

It carries out the reaction (6R)-L-erythro-5,6,7,8-tetrahydrobiopterin + L-phenylalanine + O2 = (4aS,6R)-4a-hydroxy-L-erythro-5,6,7,8-tetrahydrobiopterin + L-tyrosine. It participates in amino-acid degradation; L-phenylalanine degradation; acetoacetate and fumarate from L-phenylalanine: step 1/6. The chain is Phenylalanine-4-hydroxylase (phhA) from Ralstonia nicotianae (strain ATCC BAA-1114 / GMI1000) (Ralstonia solanacearum).